Here is a 249-residue protein sequence, read N- to C-terminus: Chitooligosaccharide deacetylase (249 aa).

Mg(2+) is bound by residues H61 and H125.

The protein belongs to the YdjC deacetylase family. ChbG subfamily. As to quaternary structure, homodimer. Mg(2+) is required as a cofactor.

Its subcellular location is the cytoplasm. It catalyses the reaction N,N'-diacetylchitobiose + H2O = N-acetyl-beta-D-glucosaminyl-(1-&gt;4)-D-glucosamine + acetate. The enzyme catalyses diacetylchitobiose-6'-phosphate + H2O = N'-monoacetylchitobiose-6'-phosphate + acetate. The protein operates within glycan degradation; chitin degradation. Its function is as follows. Involved in the degradation of chitin. ChbG is essential for growth on the acetylated chitooligosaccharides chitobiose and chitotriose but is dispensable for growth on cellobiose and chitosan dimer, the deacetylated form of chitobiose. Deacetylation of chitobiose-6-P and chitotriose-6-P is necessary for both the activation of the chb promoter by the regulatory protein ChbR and the hydrolysis of phosphorylated beta-glucosides by the phospho-beta-glucosidase ChbF. Catalyzes the removal of only one acetyl group from chitobiose-6-P to yield monoacetylchitobiose-6-P, the inducer of ChbR and the substrate of ChbF. This chain is Chitooligosaccharide deacetylase, found in Escherichia coli O7:K1 (strain IAI39 / ExPEC).